A 305-amino-acid chain; its full sequence is Sulfate adenylyltransferase subunit 2 (305 aa).

It belongs to the PAPS reductase family. CysD subfamily. Heterodimer composed of CysD, the smaller subunit, and CysN.

The enzyme catalyses sulfate + ATP + H(+) = adenosine 5'-phosphosulfate + diphosphate. The protein operates within sulfur metabolism; hydrogen sulfide biosynthesis; sulfite from sulfate: step 1/3. Its function is as follows. With CysN forms the ATP sulfurylase (ATPS) that catalyzes the adenylation of sulfate producing adenosine 5'-phosphosulfate (APS) and diphosphate, the first enzymatic step in sulfur assimilation pathway. APS synthesis involves the formation of a high-energy phosphoric-sulfuric acid anhydride bond driven by GTP hydrolysis by CysN coupled to ATP hydrolysis by CysD. This is Sulfate adenylyltransferase subunit 2 from Pseudomonas fluorescens (strain Pf0-1).